The sequence spans 244 residues: Adenosylcobinamide-GDP ribazoletransferase (244 aa).

5 helical membrane-spanning segments follow: residues 31 to 51 (LLCYPLVGLLFGLLLWLASHL), 55 to 75 (APAPLHAALLLTLWVLLSGAL), 109 to 129 (IAVVTLVLVLLLKFCALWVLV), 133 to 153 (AGALLVLAPVVGRAAMLGLFL), and 188 to 208 (LLLGGWSAIWPMALALGVFLW).

The protein belongs to the CobS family. Mg(2+) serves as cofactor.

It is found in the cell inner membrane. It carries out the reaction alpha-ribazole + adenosylcob(III)inamide-GDP = adenosylcob(III)alamin + GMP + H(+). It catalyses the reaction alpha-ribazole 5'-phosphate + adenosylcob(III)inamide-GDP = adenosylcob(III)alamin 5'-phosphate + GMP + H(+). It functions in the pathway cofactor biosynthesis; adenosylcobalamin biosynthesis; adenosylcobalamin from cob(II)yrinate a,c-diamide: step 7/7. Functionally, joins adenosylcobinamide-GDP and alpha-ribazole to generate adenosylcobalamin (Ado-cobalamin). Also synthesizes adenosylcobalamin 5'-phosphate from adenosylcobinamide-GDP and alpha-ribazole 5'-phosphate. The sequence is that of Adenosylcobinamide-GDP ribazoletransferase from Pseudomonas putida (strain W619).